The primary structure comprises 899 residues: Plasma membrane ATPase (899 aa).

Residues 1-72 (MSAATEPTKE…TDPSYGLTSD (72 aa)) form a disordered region. The Cytoplasmic segment spans residues 1 to 96 (MSAATEPTKE…SEETENLFVK (96 aa)). Residues 17 to 29 (DSDDEDEDIDQLI) are compositionally biased toward acidic residues. The chain crosses the membrane as a helical span at residues 97-117 (FLMFFIGPIQFVMEAAAILAA). Over 118–121 (GLED) the chain is Extracellular. Residues 122–141 (WVDFGVICGLLFLNAAVGFI) traverse the membrane as a helical segment. The Cytoplasmic segment spans residues 142 to 272 (QEYQAGSIVD…GSGHFTEVLN (131 aa)). Residues 273–294 (GIGTILLILVIVTLLLVWVASF) form a helical membrane-spanning segment. At 295–305 (YRTNKIVRILR) the chain is on the extracellular side. The chain crosses the membrane as a helical span at residues 306–328 (YTLAITIVGVPVGLPAVVTTTMA). At 329–700 (VGAAYLAKKQ…IAILNRSLNI (372 aa)) the chain is on the cytoplasmic side. The active-site 4-aspartylphosphate intermediate is the Asp-359. The Mg(2+) site is built by Asp-615 and Asp-619. A helical membrane pass occupies residues 701-719 (DLVVFIAIFADVATLAIAY). The Extracellular segment spans residues 720–735 (DNAPYSPKPVKWNLRR). Residues 736-755 (LWGMSVILGIILAIGTWITL) form a helical membrane-spanning segment. At 756-805 (TTMFVPKGGIIQNFGSIDGVLFLQISLTENWLIFITRAAGPFWSSIPSWQ) the chain is on the cytoplasmic side. Residues 806–826 (LSGAVLIVDIIATMFCLFGWW) form a helical membrane-spanning segment. The Extracellular portion of the chain corresponds to 827-838 (SQNWNDIVTVVR). Residues 839–855 (VWIFSFGVFCVMGGAYY) traverse the membrane as a helical segment. Over 856-899 (MMSESEAFDRFMNGKSRRDKPSGRSVEDFLMAMQRVSTQHEKEN) the chain is Cytoplasmic.

Belongs to the cation transport ATPase (P-type) (TC 3.A.3) family. Type IIIA subfamily.

It localises to the cell membrane. It catalyses the reaction ATP + H2O + H(+)(in) = ADP + phosphate + 2 H(+)(out). Its activity is regulated as follows. Activated by high pH or also by potassium ions when the medium pH is low. Its function is as follows. The plasma membrane ATPase of plants and fungi is a hydrogen ion pump. The proton gradient it generates drives the active transport of nutrients by H(+)-symport. The resulting external acidification and/or internal alkinization may mediate growth responses. In Kluyveromyces lactis (strain ATCC 8585 / CBS 2359 / DSM 70799 / NBRC 1267 / NRRL Y-1140 / WM37) (Yeast), this protein is Plasma membrane ATPase (PMA1).